The following is a 460-amino-acid chain: MALPLRTARHASRLAQTIGRRGYATAEPDLKSALKAVIPAKRELLAEVKKQGDEVIGEVKVSNVIGGMRGLKSMLWEGSVLDADEGIRFHGKTIKDCQKELPKGPTGTEMLPEAMFWLLLTGEVPSTSQVRAFSKQLAEESHLPDHILDLAKSFPKHMHPMTQISIITAALNTESKFAKLYEKGINKADYWEPTFDDAISLLAKIPRVAALVFRPNEIDVVGRQKLDPAQDWSYNFAELLGKGGANNADFHDLLRLYLALHGDHEGGNVSAHATHLVGSALSDPFLSYSAGLLGLAGPLHGLAAQEVLRWILAMQEKIGTKFTDEDVRAYLWDTLKSGRVVPGYGHGVLRKPDPRFQALMDFAATRKDVLANPVFQLVKKNSEIAPGVLTEHGKTKNPHPNVDAASGVLFYHYGFQQPLYYTVTFGVSRALGPLVQLIWDRALGLPIERPKSINLLGLKK.

The transit peptide at methionine 1–alanine 24 directs the protein to the mitochondrion. The CoA site is built by arginine 69 and lysine 187. Residue histidine 264 participates in oxaloacetate binding. Residue leucine 299 coordinates CoA. The active site involves histidine 300. CoA contacts are provided by valine 341, glycine 343, and tyrosine 344. The oxaloacetate site is built by histidine 346 and arginine 355. The active site involves histidine 346. CoA is bound by residues threonine 395, lysine 396, and asparagine 401. Aspartate 403 is an active-site residue. 2 residues coordinate oxaloacetate: arginine 429 and arginine 449.

This sequence belongs to the citrate synthase family. As to quaternary structure, homodimer.

The protein resides in the mitochondrion matrix. It catalyses the reaction propanoyl-CoA + oxaloacetate + H2O = (2S,3S)-2-methylcitrate + CoA + H(+). It carries out the reaction oxaloacetate + acetyl-CoA + H2O = citrate + CoA + H(+). It participates in organic acid metabolism; propanoate degradation. With respect to regulation, partially inhibited by ATP. Catalyzes the synthesis of (2S,3S)-2-methylcitrate from propionyl-CoA and oxaloacetate and also from acetyl-CoA and oxaloacetate with a greater efficiency. Also has citrate synthase activity and can substitute for the loss of citA activity. The sequence is that of 2-methylcitrate synthase, mitochondrial from Emericella nidulans (strain FGSC A4 / ATCC 38163 / CBS 112.46 / NRRL 194 / M139) (Aspergillus nidulans).